Consider the following 350-residue polypeptide: S-adenosylmethionine:tRNA ribosyltransferase-isomerase (350 aa).

Belongs to the QueA family. In terms of assembly, monomer.

It localises to the cytoplasm. It carries out the reaction 7-aminomethyl-7-carbaguanosine(34) in tRNA + S-adenosyl-L-methionine = epoxyqueuosine(34) in tRNA + adenine + L-methionine + 2 H(+). Its pathway is tRNA modification; tRNA-queuosine biosynthesis. Transfers and isomerizes the ribose moiety from AdoMet to the 7-aminomethyl group of 7-deazaguanine (preQ1-tRNA) to give epoxyqueuosine (oQ-tRNA). The sequence is that of S-adenosylmethionine:tRNA ribosyltransferase-isomerase from Bacillus mycoides (strain KBAB4) (Bacillus weihenstephanensis).